A 1592-amino-acid polypeptide reads, in one-letter code: Probable serine/threonine-protein kinase DDB_G0293958 (1592 aa).

Residues 1-302 enclose the Protein kinase 1 domain; sequence MTGFEIFKKK…CLNYLKEKLI (302 aa). ATP contacts are provided by residues 2–10 and Lys43; that span reads TGFEIFKKK. Asp158 serves as the catalytic Proton acceptor. 3 disordered regions span residues 348-402, 455-526, and 837-867; these read INNN…NNNN, FNDI…SNYN, and KNNNNFYNNNNNNNNNNNNNNNNNNNSNDKS. The segment covering 349-402 has biased composition (low complexity); the sequence is NNNNNNNNNNNNNNNNNNNNNNNNNNNNNNNNNNNNNNNNNNNNNNNNNNNNNN. Residues 461–518 adopt a coiled-coil conformation; sequence STTGEEEEEEKKDNLKRQNENNQIEQEDKGEKHLKETLNNNNNNNNNNNNNNNNNNNN. Over residues 486 to 496 the composition is skewed to basic and acidic residues; sequence QEDKGEKHLKE. Composition is skewed to low complexity over residues 499–526 and 837–864; these read NNNNNNNNNNNNNNNNNNNNNNNNSNYN and KNNNNFYNNNNNNNNNNNNNNNNNNNSN. A Protein kinase 2 domain is found at 1342-1592; the sequence is LGTYNLIGDS…KELIECLNKL (251 aa). ATP contacts are provided by residues 1348-1356 and Lys1376; that span reads IGDSVFRNI. The active-site Proton acceptor is the Asp1474.

Belongs to the protein kinase superfamily. Ser/Thr protein kinase family.

It catalyses the reaction L-seryl-[protein] + ATP = O-phospho-L-seryl-[protein] + ADP + H(+). It carries out the reaction L-threonyl-[protein] + ATP = O-phospho-L-threonyl-[protein] + ADP + H(+). In Dictyostelium discoideum (Social amoeba), this protein is Probable serine/threonine-protein kinase DDB_G0293958.